Consider the following 664-residue polypeptide: Macoilin (664 aa).

4 helical membrane passes run 28–48 (TFLY…DFVL), 75–95 (AFSV…LLFI), 120–140 (VCLP…AIRF), and 154–174 (FAAH…KSYV). Over residues 253 to 265 (REKGKEKDKDAKK) the composition is skewed to basic and acidic residues. The segment at 253 to 274 (REKGKEKDKDAKKHNLGINNNN) is disordered. Phosphoserine is present on S305. Over residues 320-348 (KNYKNASGVVNSSPRSHSATNGSIPSSSS) the composition is skewed to polar residues. The segment at 320–367 (KNYKNASGVVNSSPRSHSATNGSIPSSSSKNEKKQKCTSKSPSAHKDL) is disordered. An N-linked (GlcNAc...) asparagine glycan is attached at N324. S332 bears the Phosphoserine mark. N-linked (GlcNAc...) asparagine glycosylation is found at N340 and N452. The tract at residues 630–664 (TSPLSPVSPHYSSKFVETSPSGLDPNASVYQPLKK) is disordered. 2 positions are modified to phosphoserine: S631 and S634. N-linked (GlcNAc...) asparagine glycosylation occurs at N655.

Belongs to the macoilin family.

Its subcellular location is the rough endoplasmic reticulum membrane. It localises to the nucleus membrane. Functionally, plays a role in the regulation of neuronal activity. In Sus scrofa (Pig), this protein is Macoilin (MACO1).